The sequence spans 204 residues: Leucyl/phenylalanyl-tRNA--protein transferase (204 aa).

Belongs to the L/F-transferase family.

Its subcellular location is the cytoplasm. The catalysed reaction is N-terminal L-lysyl-[protein] + L-leucyl-tRNA(Leu) = N-terminal L-leucyl-L-lysyl-[protein] + tRNA(Leu) + H(+). It carries out the reaction N-terminal L-arginyl-[protein] + L-leucyl-tRNA(Leu) = N-terminal L-leucyl-L-arginyl-[protein] + tRNA(Leu) + H(+). It catalyses the reaction L-phenylalanyl-tRNA(Phe) + an N-terminal L-alpha-aminoacyl-[protein] = an N-terminal L-phenylalanyl-L-alpha-aminoacyl-[protein] + tRNA(Phe). Functionally, functions in the N-end rule pathway of protein degradation where it conjugates Leu, Phe and, less efficiently, Met from aminoacyl-tRNAs to the N-termini of proteins containing an N-terminal arginine or lysine. In Sinorhizobium fredii (strain NBRC 101917 / NGR234), this protein is Leucyl/phenylalanyl-tRNA--protein transferase.